Reading from the N-terminus, the 189-residue chain is Peptidyl-tRNA hydrolase (189 aa).

Tyr14 contributes to the tRNA binding site. The Proton acceptor role is filled by His19. Phe64, Asn66, and Asn112 together coordinate tRNA.

It belongs to the PTH family. As to quaternary structure, monomer.

The protein resides in the cytoplasm. The catalysed reaction is an N-acyl-L-alpha-aminoacyl-tRNA + H2O = an N-acyl-L-amino acid + a tRNA + H(+). Its function is as follows. Hydrolyzes ribosome-free peptidyl-tRNAs (with 1 or more amino acids incorporated), which drop off the ribosome during protein synthesis, or as a result of ribosome stalling. Functionally, catalyzes the release of premature peptidyl moieties from peptidyl-tRNA molecules trapped in stalled 50S ribosomal subunits, and thus maintains levels of free tRNAs and 50S ribosomes. The polypeptide is Peptidyl-tRNA hydrolase (Zymomonas mobilis subsp. mobilis (strain ATCC 31821 / ZM4 / CP4)).